A 673-amino-acid chain; its full sequence is UvrABC system protein B (673 aa).

One can recognise a Helicase ATP-binding domain in the interval 26–414; sequence EGLEDGLAHQ…GGDVVDQVVR (389 aa). 39–46 provides a ligand contact to ATP; that stretch reads GVTGSGKT. A Beta-hairpin motif is present at residues 92–115; it reads YYDYYQPEAYVPSSDTFIEKDASV. One can recognise a Helicase C-terminal domain in the interval 431 to 597; sequence QVDDLLSEIR…GLNKKVVDIL (167 aa). Residues 633 to 668 enclose the UVR domain; it reads QQKIHELEGLMMQHAQNLEFEEAAQIRDQLHQLREL.

It belongs to the UvrB family. Forms a heterotetramer with UvrA during the search for lesions. Interacts with UvrC in an incision complex.

Its subcellular location is the cytoplasm. Its function is as follows. The UvrABC repair system catalyzes the recognition and processing of DNA lesions. A damage recognition complex composed of 2 UvrA and 2 UvrB subunits scans DNA for abnormalities. Upon binding of the UvrA(2)B(2) complex to a putative damaged site, the DNA wraps around one UvrB monomer. DNA wrap is dependent on ATP binding by UvrB and probably causes local melting of the DNA helix, facilitating insertion of UvrB beta-hairpin between the DNA strands. Then UvrB probes one DNA strand for the presence of a lesion. If a lesion is found the UvrA subunits dissociate and the UvrB-DNA preincision complex is formed. This complex is subsequently bound by UvrC and the second UvrB is released. If no lesion is found, the DNA wraps around the other UvrB subunit that will check the other stand for damage. The polypeptide is UvrABC system protein B (Shigella flexneri).